Here is a 68-residue protein sequence, read N- to C-terminus: Sec-independent protein translocase protein TatA (68 aa).

The chain crosses the membrane as a helical span at residues 1 to 21 (MGSFSIWHWLIVLAVVLLLFG). The tract at residues 48 to 68 (AAAADKSIDGKTVDHKSDEVR) is disordered. Residues 53–68 (KSIDGKTVDHKSDEVR) show a composition bias toward basic and acidic residues.

This sequence belongs to the TatA/E family. As to quaternary structure, the Tat system comprises two distinct complexes: a TatABC complex, containing multiple copies of TatA, TatB and TatC subunits, and a separate TatA complex, containing only TatA subunits. Substrates initially bind to the TatABC complex, which probably triggers association of the separate TatA complex to form the active translocon.

It localises to the cell inner membrane. Part of the twin-arginine translocation (Tat) system that transports large folded proteins containing a characteristic twin-arginine motif in their signal peptide across membranes. TatA could form the protein-conducting channel of the Tat system. This is Sec-independent protein translocase protein TatA from Sinorhizobium medicae (strain WSM419) (Ensifer medicae).